A 587-amino-acid chain; its full sequence is Bifunctional dihydrofolate reductase-thymidylate synthase (587 aa).

The 229-residue stretch at 9-237 folds into the DHFR domain; that stretch reads DIYAICACCK…TTLDFIIYSK (229 aa). 36-42 lines the NADP(+) pocket; it reads GIGNAGV. Asp51 lines the substrate pocket. NADP(+) contacts are provided by residues 108–110 and 129–132; these read KKS and LSRT. Substrate contacts are provided by Ile173, Tyr179, and Thr194. 174 to 181 contacts NADP(+); that stretch reads GGSSVYKE. Residues 301-587 form a thymidylate synthase region; it reads NHPEYQYLNI…HDKINMDMAA (287 aa). Residue Arg324 participates in dUMP binding. The active site involves Cys469. DUMP-binding positions include His470, 488–492, Asn500, and 530–532; these read QRSCD and HVY.

The protein in the N-terminal section; belongs to the dihydrofolate reductase family. It in the C-terminal section; belongs to the thymidylate synthase family. As to quaternary structure, homodimer.

It catalyses the reaction (6S)-5,6,7,8-tetrahydrofolate + NADP(+) = 7,8-dihydrofolate + NADPH + H(+). The enzyme catalyses dUMP + (6R)-5,10-methylene-5,6,7,8-tetrahydrofolate = 7,8-dihydrofolate + dTMP. Its pathway is cofactor biosynthesis; tetrahydrofolate biosynthesis; 5,6,7,8-tetrahydrofolate from 7,8-dihydrofolate: step 1/1. Functionally, bifunctional enzyme. Involved in de novo dTMP biosynthesis. Key enzyme in folate metabolism. Catalyzes an essential reaction for de novo glycine and purine synthesis, DNA precursor synthesis, and for the conversion of dUMP to dTMP. This chain is Bifunctional dihydrofolate reductase-thymidylate synthase, found in Plasmodium berghei (strain Anka).